A 37-amino-acid chain; its full sequence is Large ribosomal subunit protein bL36 (37 aa).

Belongs to the bacterial ribosomal protein bL36 family.

This chain is Large ribosomal subunit protein bL36, found in Pasteurella multocida (strain Pm70).